We begin with the raw amino-acid sequence, 108 residues long: uncharacterized protein (108 aa).

The span at 1–15 shows a compositional bias: polar residues; it reads MSDSNSRLVYSTQTG. Residues 1–29 are disordered; it reads MSDSNSRLVYSTQTGRIEEPKTAPVRPKG. The segment covering 16-29 has biased composition (basic and acidic residues); that stretch reads RIEEPKTAPVRPKG.

Belongs to the SUI1 family.

This is an uncharacterized protein from Salmonella typhi.